The sequence spans 256 residues: Nuclear shuttle protein (256 aa).

The Bipartite nuclear localization signal signature appears at Asn-18 to Arg-39. The Nuclear localization signal signature appears at Ser-81–Leu-96. The interaction with Arabidopsis thaliana NSI protein stretch occupies residues Glu-150 to Asp-187.

It belongs to the begomovirus nuclear shuttle protein family. As to quaternary structure, binds to single-stranded and double-stranded viral DNA. Interacts with the host nuclear shuttle interacting (NSI) protein. This interaction may allow NSP to recruit NSI monomers to the viral genome and thus regulate nuclear export of viral genome by NSP.

It is found in the host nucleus. Its subcellular location is the host cytoplasm. The protein resides in the host cell membrane. Its function is as follows. Binds to the genomic viral ssDNA, shuttles it into and out of the cell nucleus. Begomoviruses use 2 proteins to transport their DNA from cell to cell. The nuclear shuttle protein (NSP) shuttles it between nucleus and cytoplasm and the movement protein (MP) probably transports the DNA-NSP complex to the cell periphery and facilitates movement across the cell wall. This Hewittia sublobata (Coralbush) protein is Nuclear shuttle protein.